A 391-amino-acid polypeptide reads, in one-letter code: 1-deoxy-D-xylulose 5-phosphate reductoisomerase (391 aa).

Positions 10, 11, 12, 13, 38, and 122 each coordinate NADPH. Lys-123 provides a ligand contact to 1-deoxy-D-xylulose 5-phosphate. Residue Glu-124 participates in NADPH binding. Residue Asp-148 participates in Mn(2+) binding. Residues Ser-149, Glu-150, Ser-173, and His-196 each contribute to the 1-deoxy-D-xylulose 5-phosphate site. Residue Glu-150 participates in Mn(2+) binding. Gly-202 lines the NADPH pocket. Positions 209, 214, 215, and 218 each coordinate 1-deoxy-D-xylulose 5-phosphate. Residue Glu-218 participates in Mn(2+) binding.

The protein belongs to the DXR family. It depends on Mg(2+) as a cofactor. Mn(2+) serves as cofactor.

The enzyme catalyses 2-C-methyl-D-erythritol 4-phosphate + NADP(+) = 1-deoxy-D-xylulose 5-phosphate + NADPH + H(+). The protein operates within isoprenoid biosynthesis; isopentenyl diphosphate biosynthesis via DXP pathway; isopentenyl diphosphate from 1-deoxy-D-xylulose 5-phosphate: step 1/6. Its function is as follows. Catalyzes the NADPH-dependent rearrangement and reduction of 1-deoxy-D-xylulose-5-phosphate (DXP) to 2-C-methyl-D-erythritol 4-phosphate (MEP). The protein is 1-deoxy-D-xylulose 5-phosphate reductoisomerase of Wolbachia pipientis subsp. Culex pipiens (strain wPip).